The following is a 210-amino-acid chain: Glutathione S-transferase mdpJ (210 aa).

In terms of domain architecture, GST N-terminal spans 2–83 (SFGTLYTHNP…YCNDERSSLR (82 aa)). One can recognise a GST C-terminal domain in the interval 77–200 (DERSSLRILQ…VAGGVPDLGL (124 aa)).

It belongs to the GST superfamily.

Its pathway is secondary metabolite biosynthesis. Its function is as follows. Glutathione S-transferase; part of the gene cluster that mediates the biosynthesis of monodictyphenone, a prenyl xanthone derivative. The pathway begins with the synthesis of atrochrysone thioester by the polyketide synthase (PKS) mdpG. The atrochrysone carboxyl ACP thioesterase mdpF then breaks the thioester bond and releases the atrochrysone carboxylic acid from mdpG. The atrochrysone carboxylic acid is then converted to atrochrysone which is further transformed into emodin anthrone. The next step is performed by the anthrone oxygenase mdpH that catalyzes the oxidation of emodinanthrone to emodin. Emodin is further modified to yield monodictyphenone via several steps involving mdpB, mdpC mdpJ, mdpK and mdpL. These enzymes with xptA, xptB and xptC are also proposed to be involved in the synthesis of shamixanthone from emodin. Especially, direct reduction of emodin by the short chain dehydrogenase mdpC followed by dehydration catalyzed by the scytalone dehydratase-like protein mdpB gives loss of oxygen and formation of chrysophanol intermediate in two simple steps. In Emericella nidulans (strain FGSC A4 / ATCC 38163 / CBS 112.46 / NRRL 194 / M139) (Aspergillus nidulans), this protein is Glutathione S-transferase mdpJ.